Consider the following 336-residue polypeptide: MKAIFNRRVVVDSSSRLTKLLANPTTHSHLNRQTFTSLYKPNQSRHFRTHYLPSSPSSPPVSRFDPSQLWRSEKIRGFFASALGNKAVKLGNLVESRVGFIGSQFPKKGFEFQRFSGFQRRGWKHWLQGLSDRDVVLGLVIANAGVFVMWRVFNQQFMMNNFMISLDNFKSGRLHTLITSAFSHIDIGHIVSNMIGLYFFGTSIARNFGPQFLLKLYLAGALGGSVFYLIHHAYMAATSPKGQGAFVRDPSRTPGLGASGAVNAIMLLDIFLHPRATLYLEFFIPVPAMLLGIFLIGKDILRITEGNSNISGSAHLGGAAVAAIAWARIRKGRFRF.

The transit peptide at 1-85 (MKAIFNRRVV…RGFFASALGN (85 aa)) directs the protein to the mitochondrion. Transmembrane regions (helical) follow at residues 135-155 (VVLGLVIANAGVFVMWRVFNQ), 185-205 (IDIGHIVSNMIGLYFFGTSIA), 216-236 (LYLAGALGGSVFYLIHHAYMA), 254-274 (PGLGASGAVNAIMLLDIFLHP), 276-296 (ATLYLEFFIPVPAMLLGIFLI), and 307-327 (NSNISGSAHLGGAAVAAIAWA). The active-site Nucleophile is Ser259. Residue His315 is the Charge relay system of the active site.

This sequence belongs to the peptidase S54 family.

It is found in the mitochondrion membrane. In terms of biological role, probable rhomboid-type serine protease that catalyzes intramembrane proteolysis. Unable to cleave either of the yeast Pcp1 substrates in yeast cells. This chain is RHOMBOID-like protein 12, mitochondrial, found in Arabidopsis thaliana (Mouse-ear cress).